The sequence spans 265 residues: Flagellar brake protein YcgR (265 aa).

The region spanning 135 to 252 (QRRESYRLET…DETIQRYIFR (118 aa)) is the PilZ domain.

Belongs to the YcgR family. In terms of assembly, monomer. Interacts with the flagellar basal bodies.

It is found in the bacterial flagellum basal body. Its function is as follows. Acts as a flagellar brake, regulating swimming and swarming in a bis-(3'-5') cyclic diguanylic acid (c-di-GMP)-dependent manner. Binds 1 c-di-GMP dimer per subunit. Increasing levels of c-di-GMP lead to decreased motility. The chain is Flagellar brake protein YcgR from Xanthomonas campestris pv. campestris (strain B100).